Reading from the N-terminus, the 356-residue chain is 1-deoxy-D-xylulose 5-phosphate reductoisomerase (356 aa).

NADPH is bound by residues T7, G8, S9, I10, G31, N33, and N111. K112 is a 1-deoxy-D-xylulose 5-phosphate binding site. E113 contacts NADPH. D131 lines the Mn(2+) pocket. 4 residues coordinate 1-deoxy-D-xylulose 5-phosphate: S132, E133, S155, and H178. Residue E133 coordinates Mn(2+). G184 serves as a coordination point for NADPH. 4 residues coordinate 1-deoxy-D-xylulose 5-phosphate: S191, N196, K197, and E200. E200 is a Mn(2+) binding site.

The protein belongs to the DXR family. Requires Mg(2+) as cofactor. The cofactor is Mn(2+).

It carries out the reaction 2-C-methyl-D-erythritol 4-phosphate + NADP(+) = 1-deoxy-D-xylulose 5-phosphate + NADPH + H(+). It participates in isoprenoid biosynthesis; isopentenyl diphosphate biosynthesis via DXP pathway; isopentenyl diphosphate from 1-deoxy-D-xylulose 5-phosphate: step 1/6. Functionally, catalyzes the NADPH-dependent rearrangement and reduction of 1-deoxy-D-xylulose-5-phosphate (DXP) to 2-C-methyl-D-erythritol 4-phosphate (MEP). The protein is 1-deoxy-D-xylulose 5-phosphate reductoisomerase of Campylobacter jejuni subsp. doylei (strain ATCC BAA-1458 / RM4099 / 269.97).